The chain runs to 803 residues: Leucine--tRNA ligase (803 aa).

A 'HIGH' region motif is present at residues P40 to H51. Positions K575–S579 match the 'KMSKS' region motif. K578 is a binding site for ATP.

It belongs to the class-I aminoacyl-tRNA synthetase family.

It is found in the cytoplasm. The catalysed reaction is tRNA(Leu) + L-leucine + ATP = L-leucyl-tRNA(Leu) + AMP + diphosphate. The polypeptide is Leucine--tRNA ligase (Lacticaseibacillus paracasei (strain ATCC 334 / BCRC 17002 / CCUG 31169 / CIP 107868 / KCTC 3260 / NRRL B-441) (Lactobacillus paracasei)).